Consider the following 319-residue polypeptide: Taste receptor type 2 member 14 (319 aa).

At 1–7 (MDGVIKS) the chain is on the extracellular side. The chain crosses the membrane as a helical span at residues 8–28 (IFTFILIVEFIIGNLGNSFIV). Residues 29–55 (LVNCIDWVKRRKISLVDQILIALAISR) are Cytoplasmic-facing. A helical transmembrane segment spans residues 56–76 (ISLVWSIFGSWCVSVFFPALF). At 77 to 87 (ATEKLLRMLTN) the chain is on the extracellular side. Positions 86 and 89 each coordinate cholesterol. A helical membrane pass occupies residues 88–108 (IWTVTNHFSVWLATILGTFYF). At 109-129 (LKIANFSNSIFLYLKWRVKKV) the chain is on the cytoplasmic side. A helical transmembrane segment spans residues 130–150 (VLVLLLVTLGLLFLNILLINI). At 151-184 (HINASINGYRGNMTCSSASCNFIRFSRAIALTST) the chain is on the extracellular side. N153 and N162 each carry an N-linked (GlcNAc...) asparagine glycan. A180 is a binding site for cholesterol. The helical transmembrane segment at 185–205 (VFVLIPFTLSLATSLLLSFSL) threads the bilayer. The Cytoplasmic portion of the chain corresponds to 206–233 (WKHHKKMQHTVKGYRDVSTKAHRGVMQT). Residues 234 to 254 (VITFLLLYAVFLLTFFISIWA) form a helical membrane-spanning segment. Residues 255-263 (SVRLKENQI) lie on the Extracellular side of the membrane. The chain crosses the membrane as a helical span at residues 264–284 (IILSEMMGLAYPSGHSCVLIL). S267 and M270 together coordinate cholesterol. Over 285-319 (GNKKLRQASLSVLWWLRYRFKHGEPSGHKEFRESS) the chain is Cytoplasmic.

This sequence belongs to the G-protein coupled receptor T2R family. As to quaternary structure, core component of the TAS2R14-GNAI1 complex, consisting of TAS2R14, GNAI1, GNB1 and GNG2; within the complex interacts with GNAI1. Core component of the TAS2R14-GNAT3 complex, consisting of TAS2R14, GNAT3, GNB1 and GNG2; within the complex interacts with GNAT3. Core component of the TAS2R14-GNAS2 complex, consisting of TAS2R14, GNAS2, GNB1 and GNG2; within the complex interacts with GNAS2.

It localises to the membrane. The catalysed reaction is Ca(2+)(in) = Ca(2+)(out). It carries out the reaction 3',5'-cyclic AMP(in) = 3',5'-cyclic AMP(out). Its activity is regulated as follows. Basal activity is enhanced by binding to bitter tastants, such as flufenamic acid and aristolochic acid. Regulated by cholesterol in a concentration-dependent manner. Gustducin-linked G-protein coupled receptor that plays a role in the perception of bitterness. The activity of this receptor stimulates GNAT3, activating the gustducin G-protein pathway. Likely plays a role in sensing the chemical composition of the gastrointestinal content and other extra-oral tissues via the inhibitory G-protein pathways. This Macaca mulatta (Rhesus macaque) protein is Taste receptor type 2 member 14 (TAS2R14).